We begin with the raw amino-acid sequence, 363 residues long: Trichothecene biosynthesis protein 14 (363 aa).

It belongs to the TRI14 family.

In terms of biological role, part of the gene cluster that mediates the production of the antimicrobial trichothecene harzianum A (HA) that plays a role in Botrytis cinerea antagonistic activity and plant defense priming. The biosynthesis of harzianum A begins with the cyclization of farnesyl diphosphate to trichodiene and is catalyzed by the trichodiene synthase TRI5. Trichodiene undergoes a series of oxygenations catalyzed by the cytochrome P450 monooxygenase TRI4. TRI4 controls the addition of 3 oxygens at C-2, C-11, and the C-12, C-13-epoxide to form the intermediate isotrichodiol. Isotrichodiol then undergoes a non-enzymatic isomerization and cyclization to form 12,13-epoxytrichothec-9-ene (EPT) which is further converted to trichodermol by the cytochrome P450 monooxygenase TRI11 via C-4 hydroxylation. The last step of HA synthesis is esterification of an octatriendioyl moiety to the C-4 oxygen of trichodermol. The octatriendioyl moiety is probably produced by the polyketide synthase TRI17 and the esterification performed by the trichothecene O-acetyltransferase TRI3. The protein is Trichothecene biosynthesis protein 14 of Trichoderma arundinaceum.